The following is a 642-amino-acid chain: Chaperone protein DnaK (642 aa).

Thr-200 carries the post-translational modification Phosphothreonine; by autocatalysis. Over residues 600-616 the composition is skewed to low complexity; the sequence is EAAQQSAGAAGPMPGAP. Residues 600-642 are disordered; that stretch reads EAAQQSAGAAGPMPGAPAEEEPSDGPRKAKGRVVDAEIVDDDK. The span at 623–634 shows a compositional bias: basic and acidic residues; the sequence is DGPRKAKGRVVD.

Belongs to the heat shock protein 70 family.

In terms of biological role, acts as a chaperone. The chain is Chaperone protein DnaK from Akkermansia muciniphila (strain ATCC BAA-835 / DSM 22959 / JCM 33894 / BCRC 81048 / CCUG 64013 / CIP 107961 / Muc).